The following is a 410-amino-acid chain: Zinc finger protein 322 (410 aa).

C2H2-type zinc fingers lie at residues 81–103, 109–131, 137–159, 165–187, 193–215, 221–243, 249–271, and 277–299; these read YRCD…QRIH, YKCS…QRTH, YTCD…QRSH, YLCN…RRTH, FKCL…QRTH, YKCN…KRVH, YKCG…QRVH, and YKCL…QATH. The segment at 303 to 325 adopts a C2H2-type 9; degenerate zinc-finger fold; it reads FKCLEYEKSFNCSSDFIVHQRIH. A C2H2-type 10; degenerate zinc finger spans residues 361–383; sequence YKYSVCDKTFHHSSALLQHQTVH. A Phosphoserine modification is found at Ser400.

This sequence belongs to the krueppel C2H2-type zinc-finger protein family. Interacts with POU5F1.

It is found in the nucleus. Its subcellular location is the cytoplasm. In terms of biological role, transcriptional activator. Important for maintenance of pluripotency in embryonic stem cells. Binds directly to the POU5F1 distal enhancer and the NANOG proximal promoter, and enhances expression of both genes. Can also bind to numerous other gene promoters and regulates expression of many other pluripotency factors, either directly or indirectly. Promotes inhibition of MAPK signaling during embryonic stem cell differentiation. The polypeptide is Zinc finger protein 322 (Znf322) (Mus musculus (Mouse)).